A 414-amino-acid polypeptide reads, in one-letter code: DNA primase small subunit PriS (414 aa).

Active-site residues include Asp98, Asp100, and Asp312.

It belongs to the eukaryotic-type primase small subunit family. Heterodimer of a small subunit (PriS) and a large subunit (PriL). Mg(2+) serves as cofactor. Requires Mn(2+) as cofactor.

Functionally, catalytic subunit of DNA primase, an RNA polymerase that catalyzes the synthesis of short RNA molecules used as primers for DNA polymerase during DNA replication. The small subunit contains the primase catalytic core and has DNA synthesis activity on its own. Binding to the large subunit stabilizes and modulates the activity, increasing the rate of DNA synthesis while decreasing the length of the DNA fragments, and conferring RNA synthesis capability. The DNA polymerase activity may enable DNA primase to also catalyze primer extension after primer synthesis. May also play a role in DNA repair. The sequence is that of DNA primase small subunit PriS from Methanosarcina acetivorans (strain ATCC 35395 / DSM 2834 / JCM 12185 / C2A).